The chain runs to 376 residues: Glucose-1-phosphate adenylyltransferase (376 aa).

Residues Tyr-101, Gly-166, 181–182 (EK), and Ser-192 each bind alpha-D-glucose 1-phosphate.

It belongs to the bacterial/plant glucose-1-phosphate adenylyltransferase family. Homotetramer.

It catalyses the reaction alpha-D-glucose 1-phosphate + ATP + H(+) = ADP-alpha-D-glucose + diphosphate. The protein operates within glycan biosynthesis; glycogen biosynthesis. In terms of biological role, involved in the biosynthesis of ADP-glucose, a building block required for the elongation reactions to produce glycogen. Catalyzes the reaction between ATP and alpha-D-glucose 1-phosphate (G1P) to produce pyrophosphate and ADP-Glc. This chain is Glucose-1-phosphate adenylyltransferase, found in Bacillus thuringiensis (strain Al Hakam).